The sequence spans 259 residues: Probable ATP-dependent transporter ycf16 (259 aa).

Positions 9-253 (LEVKNLKAQV…EIKGYDWLNE (245 aa)) constitute an ABC transporter domain. 41 to 48 (GPNGSGKS) is a binding site for ATP.

The protein belongs to the ABC transporter superfamily. Ycf16 family.

The protein resides in the plastid. The protein localises to the cyanelle. The chain is Probable ATP-dependent transporter ycf16 (ycf16) from Cyanophora paradoxa.